Reading from the N-terminus, the 137-residue chain is Probable 4-amino-4-deoxy-L-arabinose-phosphoundecaprenol flippase subunit ArnF (137 aa).

Residues 1 to 3 (MNA) lie on the Cytoplasmic side of the membrane. Residues 4 to 24 (LRGWLAALGSVLLASAAQLGM) traverse the membrane as a helical segment. The Periplasmic segment spans residues 25-44 (RWGMSRLPLPEAWAGQTPER). Residues 45–65 (AALLAVALAVAAYAASLLCWL) traverse the membrane as a helical segment. Over 66 to 76 (AALRHLPLGRA) the chain is Cytoplasmic. Residues 77–97 (YSLLSASYALVYLLAASLPAF) traverse the membrane as a helical segment. Residues 98 to 100 (DET) lie on the Periplasmic side of the membrane. The chain crosses the membrane as a helical span at residues 101–121 (FSTSKTLGVGLVVLGVLTVNA). Topologically, residues 122–137 (RRTAAAPAHHPSRKAP) are cytoplasmic.

This sequence belongs to the ArnF family. As to quaternary structure, heterodimer of ArnE and ArnF.

The protein resides in the cell inner membrane. It participates in bacterial outer membrane biogenesis; lipopolysaccharide biosynthesis. Its function is as follows. Translocates 4-amino-4-deoxy-L-arabinose-phosphoundecaprenol (alpha-L-Ara4N-phosphoundecaprenol) from the cytoplasmic to the periplasmic side of the inner membrane. This Pseudomonas aeruginosa (strain ATCC 15692 / DSM 22644 / CIP 104116 / JCM 14847 / LMG 12228 / 1C / PRS 101 / PAO1) protein is Probable 4-amino-4-deoxy-L-arabinose-phosphoundecaprenol flippase subunit ArnF.